Reading from the N-terminus, the 262-residue chain is Phosphate import ATP-binding protein PstB (262 aa).

Residues 16-257 form the ABC transporter domain; sequence MEARHLSVRY…PSEQRTEDYV (242 aa). Residue 48 to 55 participates in ATP binding; that stretch reads GPSGCGKS.

This sequence belongs to the ABC transporter superfamily. Phosphate importer (TC 3.A.1.7) family. As to quaternary structure, the complex is composed of two ATP-binding proteins (PstB), two transmembrane proteins (PstC and PstA) and a solute-binding protein (PstS).

Its subcellular location is the cell inner membrane. It catalyses the reaction phosphate(out) + ATP + H2O = ADP + 2 phosphate(in) + H(+). Part of the ABC transporter complex PstSACB involved in phosphate import. Responsible for energy coupling to the transport system. This is Phosphate import ATP-binding protein PstB from Anaeromyxobacter dehalogenans (strain 2CP-C).